A 431-amino-acid chain; its full sequence is MANSC domain-containing protein 1 (431 aa).

The N-terminal stretch at 1-26 (MFFGGEGSLTYTLVIICFLTLRLSAS) is a signal peptide. The Extracellular portion of the chain corresponds to 27-385 (QNCLKKSLED…QYGLPFEKWL (359 aa)). An MANSC domain is found at 33–117 (SLEDVVIDIQ…LKPAKGLMSY (85 aa)). Asparagine 72, asparagine 222, and asparagine 251 each carry an N-linked (GlcNAc...) asparagine glycan. The interval 234–277 (SPHTTSATPKPATLLPTNASVTPSGTSQPQLATTAPPVTTVTSQ) is disordered. Over residues 248 to 261 (LPTNASVTPSGTSQ) the composition is skewed to polar residues. Over residues 262–277 (PQLATTAPPVTTVTSQ) the composition is skewed to low complexity. Asparagine 327 and asparagine 352 each carry an N-linked (GlcNAc...) asparagine glycan. A disordered region spans residues 352 to 372 (NKTASWEGREASPGSSSQGSV). Residues 386–408 (LIGSLLFGVLFLVIGLVLLGRIL) form a helical membrane-spanning segment. The Cytoplasmic portion of the chain corresponds to 409–431 (SESLRRKRYSRLDYLINGIYVDI).

Widely expressed.

It is found in the membrane. The polypeptide is MANSC domain-containing protein 1 (MANSC1) (Homo sapiens (Human)).